Here is a 542-residue protein sequence, read N- to C-terminus: Chaperonin GroEL 3 (542 aa).

ATP contacts are provided by residues 30–33 (TLGP), K51, 87–91 (DGTTT), G415, and D494. Residues 523–542 (KPKKKEPPMPAMPSDMGDYD) form a disordered region.

Belongs to the chaperonin (HSP60) family. In terms of assembly, forms a cylinder of 14 subunits composed of two heptameric rings stacked back-to-back. Interacts with the co-chaperonin GroES.

Its subcellular location is the cytoplasm. The catalysed reaction is ATP + H2O + a folded polypeptide = ADP + phosphate + an unfolded polypeptide.. Its function is as follows. Together with its co-chaperonin GroES, plays an essential role in assisting protein folding. The GroEL-GroES system forms a nano-cage that allows encapsulation of the non-native substrate proteins and provides a physical environment optimized to promote and accelerate protein folding. This chain is Chaperonin GroEL 3, found in Syntrophus aciditrophicus (strain SB).